Reading from the N-terminus, the 486-residue chain is Probable cytosol aminopeptidase (486 aa).

Positions 256 and 261 each coordinate Mn(2+). Residue Lys-268 is part of the active site. 3 residues coordinate Mn(2+): Asp-280, Asp-339, and Glu-341. Arg-343 is an active-site residue.

This sequence belongs to the peptidase M17 family. Mn(2+) serves as cofactor.

It is found in the cytoplasm. It catalyses the reaction Release of an N-terminal amino acid, Xaa-|-Yaa-, in which Xaa is preferably Leu, but may be other amino acids including Pro although not Arg or Lys, and Yaa may be Pro. Amino acid amides and methyl esters are also readily hydrolyzed, but rates on arylamides are exceedingly low.. It carries out the reaction Release of an N-terminal amino acid, preferentially leucine, but not glutamic or aspartic acids.. Its function is as follows. Presumably involved in the processing and regular turnover of intracellular proteins. Catalyzes the removal of unsubstituted N-terminal amino acids from various peptides. This chain is Probable cytosol aminopeptidase, found in Synechococcus sp. (strain ATCC 27144 / PCC 6301 / SAUG 1402/1) (Anacystis nidulans).